The sequence spans 54 residues: Ovomucoid (54 aa).

Residues 4–54 enclose the Kazal-like domain; it reads VDCSDYPKPACSLDYMPLCGSDSKTYSNKCNFCNAVVDSNGTLTLSHFEKC. Cystine bridges form between Cys6–Cys36, Cys14–Cys33, and Cys22–Cys54. Asn43 carries an N-linked (GlcNAc...) asparagine glycan.

The protein localises to the secreted. This Chroicocephalus ridibundus (Black-headed gull) protein is Ovomucoid.